The following is an 85-amino-acid chain: uncharacterized protein (85 aa).

It belongs to the ycf76 family.

It localises to the plastid. The protein resides in the chloroplast. This is an uncharacterized protein from Zea mays (Maize).